A 665-amino-acid chain; its full sequence is Alpha-1,4-glucan:maltose-1-phosphate maltosyltransferase (665 aa).

K255, Q315, and D350 together coordinate alpha-maltose 1-phosphate. Catalysis depends on D386, which acts as the Nucleophile. N387 serves as a coordination point for alpha-maltose 1-phosphate. The active-site Proton donor is E415. An alpha-maltose 1-phosphate-binding site is contributed by 526–527 (KY).

The protein belongs to the glycosyl hydrolase 13 family. GlgE subfamily. Homodimer.

The enzyme catalyses alpha-maltose 1-phosphate + [(1-&gt;4)-alpha-D-glucosyl](n) = [(1-&gt;4)-alpha-D-glucosyl](n+2) + phosphate. Maltosyltransferase that uses maltose 1-phosphate (M1P) as the sugar donor to elongate linear or branched alpha-(1-&gt;4)-glucans. Is involved in a branched alpha-glucan biosynthetic pathway from trehalose, together with TreS, Mak and GlgB. The sequence is that of Alpha-1,4-glucan:maltose-1-phosphate maltosyltransferase from Myxococcus xanthus (strain DK1622).